We begin with the raw amino-acid sequence, 276 residues long: Protein TabB (276 aa).

It belongs to the transferase hexapeptide repeat family. Pyridoxal 5'-phosphate is required as a cofactor.

The sequence is that of Protein TabB (tabB) from Pseudomonas amygdali pv. tabaci (Pseudomonas syringae pv. tabaci).